The sequence spans 165 residues: Endoribonuclease YbeY (165 aa).

3 residues coordinate Zn(2+): histidine 126, histidine 130, and histidine 136.

It belongs to the endoribonuclease YbeY family. It depends on Zn(2+) as a cofactor.

The protein resides in the cytoplasm. Its function is as follows. Single strand-specific metallo-endoribonuclease involved in late-stage 70S ribosome quality control and in maturation of the 3' terminus of the 16S rRNA. The sequence is that of Endoribonuclease YbeY from Ruegeria pomeroyi (strain ATCC 700808 / DSM 15171 / DSS-3) (Silicibacter pomeroyi).